Consider the following 1551-residue polypeptide: ABC-type transporter phomO (1551 aa).

7 helical membrane-spanning segments follow: residues 34-54 (LYFE…LLAA), 110-130 (CTAG…CTTV), 139-159 (SVPA…LAHF), 172-192 (SSSL…APLV), 202-222 (GSAL…LIAV), 314-334 (LGLY…FTLA), and 358-378 (GLIG…GWYW). Residues 326 to 599 (LCLAGFTLAQ…LLQIIPSFGA (274 aa)) enclose the ABC transmembrane type-1 1 domain. Asparagine 384 is a glycosylation site (N-linked (GlcNAc...) asparagine). Helical transmembrane passes span 428-448 (LAYA…TWML), 452-472 (VGPP…ASTY), 535-555 (LIVG…VLVF), and 577-597 (LIWI…IPSF). The 217-residue stretch at 645 to 861 (IHNSSFSYTD…VEDENGDVDN (217 aa)) folds into the ABC transporter 1 domain. The N-linked (GlcNAc...) asparagine glycan is linked to asparagine 647. 678–685 (GPAGCGKS) contributes to the ATP binding site. Asparagine 721 is a glycosylation site (N-linked (GlcNAc...) asparagine). The interval 843-889 (YQFPPSQADVEDENGDVDNGAENTRPRESSHTTEAQSGPPEPKSKPT) is disordered. 4 helical membrane passes run 903 to 923 (SIGF…AFCL), 959 to 979 (VLPL…IVPL), 1027 to 1044 (LFNT…VILI), and 1137 to 1157 (LVLN…AVGL). In terms of domain architecture, ABC transmembrane type-1 2 spans 910–1199 (VLFIGGGIIF…LLTAWTSLET (290 aa)). N-linked (GlcNAc...) asparagine glycosylation is present at asparagine 1179. Over residues 1219–1228 (DVLVRPDSLD) the composition is skewed to basic and acidic residues. Positions 1219 to 1296 (DVLVRPDSLD…HEATTITTTS (78 aa)) are disordered. A compositionally biased stretch (acidic residues) spans 1259–1270 (YDDDDESDENTD). An ABC transporter 2 domain is found at 1287-1535 (HEATTITTTS…SDIFAFFGRS (249 aa)). 1323–1330 (GRTGSGKS) contacts ATP. N-linked (GlcNAc...) asparagine glycosylation occurs at asparagine 1486.

Belongs to the ABC transporter superfamily. ABCC family. Conjugate transporter (TC 3.A.1.208) subfamily.

It is found in the membrane. Functionally, ABC-type transporter; part of the gene cluster that mediates the biosynthesis of the phomopsins, a group of hexapeptide mycotoxins which infects lupins and causes lupinosis disease in livestock. The chain is ABC-type transporter phomO from Diaporthe leptostromiformis (Lupinosis disease fungus).